The chain runs to 120 residues: Immunoglobulin lambda variable 2-14 (120 aa).

The signal sequence occupies residues 1 to 19; the sequence is MAWALLLLTLLTQGTGSWA. Glutamine 20 bears the Pyrrolidone carboxylic acid mark. The segment at 20–44 is framework-1; sequence QSALTQPASVSGSPGQSITISCTGT. In terms of domain architecture, Ig-like spans 20-119; sequence QSALTQPASV…SSYTSSSTLH (100 aa). Cysteine 41 and cysteine 109 are joined by a disulfide. The interval 45-53 is complementarity-determining-1; that stretch reads SSDVGGYNY. Residues 54–70 form a framework-2 region; it reads VSWYQQHPGKAPKLMIY. Residues 71–73 form a complementarity-determining-2 region; sequence EVS. The framework-3 stretch occupies residues 74 to 109; sequence NRPSGVSNRFSGSKSGNTASLTISGLQAEDEADYYC. Positions 110-119 are complementarity-determining-3; the sequence is SSYTSSSTLH.

As to quaternary structure, immunoglobulins are composed of two identical heavy chains and two identical light chains; disulfide-linked.

The protein localises to the secreted. The protein resides in the cell membrane. Functionally, v region of the variable domain of immunoglobulin light chains that participates in the antigen recognition. Immunoglobulins, also known as antibodies, are membrane-bound or secreted glycoproteins produced by B lymphocytes. In the recognition phase of humoral immunity, the membrane-bound immunoglobulins serve as receptors which, upon binding of a specific antigen, trigger the clonal expansion and differentiation of B lymphocytes into immunoglobulins-secreting plasma cells. Secreted immunoglobulins mediate the effector phase of humoral immunity, which results in the elimination of bound antigens. The antigen binding site is formed by the variable domain of one heavy chain, together with that of its associated light chain. Thus, each immunoglobulin has two antigen binding sites with remarkable affinity for a particular antigen. The variable domains are assembled by a process called V-(D)-J rearrangement and can then be subjected to somatic hypermutations which, after exposure to antigen and selection, allow affinity maturation for a particular antigen. This chain is Immunoglobulin lambda variable 2-14, found in Homo sapiens (Human).